The chain runs to 196 residues: UPF0314 protein Oant_0840 (196 aa).

A run of 4 helical transmembrane segments spans residues 15–35 (WGLGALIVLAILAVQASWLYF), 65–85 (WYTLSHIIHGFLFYWLFTVIA), 127–147 (FGDSIVNSVADTVAALIGFLI), and 151–171 (LPTKITVAIALFFEVLALIVI).

It belongs to the UPF0314 family.

It is found in the cell membrane. This chain is UPF0314 protein Oant_0840, found in Brucella anthropi (strain ATCC 49188 / DSM 6882 / CCUG 24695 / JCM 21032 / LMG 3331 / NBRC 15819 / NCTC 12168 / Alc 37) (Ochrobactrum anthropi).